The primary structure comprises 119 residues: Large ribosomal subunit protein bL20 (119 aa).

Belongs to the bacterial ribosomal protein bL20 family.

Functionally, binds directly to 23S ribosomal RNA and is necessary for the in vitro assembly process of the 50S ribosomal subunit. It is not involved in the protein synthesizing functions of that subunit. The polypeptide is Large ribosomal subunit protein bL20 (Streptococcus suis (strain 98HAH33)).